The chain runs to 192 residues: ATP-dependent Clp protease proteolytic subunit 1 (192 aa).

Serine 92 acts as the Nucleophile in catalysis. Residue histidine 117 is part of the active site.

The protein belongs to the peptidase S14 family. Fourteen ClpP subunits assemble into 2 heptameric rings which stack back to back to give a disk-like structure with a central cavity, resembling the structure of eukaryotic proteasomes.

The protein localises to the cytoplasm. It catalyses the reaction Hydrolysis of proteins to small peptides in the presence of ATP and magnesium. alpha-casein is the usual test substrate. In the absence of ATP, only oligopeptides shorter than five residues are hydrolyzed (such as succinyl-Leu-Tyr-|-NHMec, and Leu-Tyr-Leu-|-Tyr-Trp, in which cleavage of the -Tyr-|-Leu- and -Tyr-|-Trp bonds also occurs).. Cleaves peptides in various proteins in a process that requires ATP hydrolysis. Has a chymotrypsin-like activity. Plays a major role in the degradation of misfolded proteins. The chain is ATP-dependent Clp protease proteolytic subunit 1 from Chlamydia abortus (strain DSM 27085 / S26/3) (Chlamydophila abortus).